The sequence spans 444 residues: Exodeoxyribonuclease 7 large subunit (444 aa).

Belongs to the XseA family. Heterooligomer composed of large and small subunits.

It localises to the cytoplasm. It catalyses the reaction Exonucleolytic cleavage in either 5'- to 3'- or 3'- to 5'-direction to yield nucleoside 5'-phosphates.. In terms of biological role, bidirectionally degrades single-stranded DNA into large acid-insoluble oligonucleotides, which are then degraded further into small acid-soluble oligonucleotides. The protein is Exodeoxyribonuclease 7 large subunit of Xylella fastidiosa (strain 9a5c).